The primary structure comprises 136 residues: Small ribosomal subunit protein bS6 (136 aa).

The interval 96-136 (VTEPSALARSGSDAEADRAPADEGSVEAAGAEPGSEAEAEA) is disordered.

Belongs to the bacterial ribosomal protein bS6 family.

Binds together with bS18 to 16S ribosomal RNA. This is Small ribosomal subunit protein bS6 from Methylococcus capsulatus (strain ATCC 33009 / NCIMB 11132 / Bath).